We begin with the raw amino-acid sequence, 475 residues long: Ribulose bisphosphate carboxylase large chain (475 aa).

A propeptide spanning residues 1–2 (MS) is cleaved from the precursor. Residue Pro-3 is modified to N-acetylproline. Lys-14 carries the N6,N6,N6-trimethyllysine modification. Substrate-binding residues include Asn-123 and Thr-173. Residue Lys-175 is the Proton acceptor of the active site. Lys-177 contributes to the substrate binding site. 3 residues coordinate Mg(2+): Lys-201, Asp-203, and Glu-204. Lys-201 carries the N6-carboxylysine modification. Catalysis depends on His-294, which acts as the Proton acceptor. Residues Arg-295, His-327, and Ser-379 each coordinate substrate.

Belongs to the RuBisCO large chain family. Type I subfamily. Heterohexadecamer of 8 large chains and 8 small chains; disulfide-linked. The disulfide link is formed within the large subunit homodimers. Requires Mg(2+) as cofactor. The disulfide bond which can form in the large chain dimeric partners within the hexadecamer appears to be associated with oxidative stress and protein turnover.

It localises to the plastid. It is found in the chloroplast. It catalyses the reaction 2 (2R)-3-phosphoglycerate + 2 H(+) = D-ribulose 1,5-bisphosphate + CO2 + H2O. It carries out the reaction D-ribulose 1,5-bisphosphate + O2 = 2-phosphoglycolate + (2R)-3-phosphoglycerate + 2 H(+). RuBisCO catalyzes two reactions: the carboxylation of D-ribulose 1,5-bisphosphate, the primary event in carbon dioxide fixation, as well as the oxidative fragmentation of the pentose substrate in the photorespiration process. Both reactions occur simultaneously and in competition at the same active site. This chain is Ribulose bisphosphate carboxylase large chain, found in Pinus longaeva (Great Basin bristlecone pine).